The chain runs to 347 residues: tRNA N6-adenosine threonylcarbamoyltransferase (347 aa).

Fe cation is bound by residues His-111 and His-115. Substrate-binding positions include 134-138 (LVSGG), Asp-167, Gly-180, and Asn-276. Residue Asp-304 participates in Fe cation binding.

This sequence belongs to the KAE1 / TsaD family. Requires Fe(2+) as cofactor.

It is found in the cytoplasm. The catalysed reaction is L-threonylcarbamoyladenylate + adenosine(37) in tRNA = N(6)-L-threonylcarbamoyladenosine(37) in tRNA + AMP + H(+). Required for the formation of a threonylcarbamoyl group on adenosine at position 37 (t(6)A37) in tRNAs that read codons beginning with adenine. Is involved in the transfer of the threonylcarbamoyl moiety of threonylcarbamoyl-AMP (TC-AMP) to the N6 group of A37, together with TsaE and TsaB. TsaD likely plays a direct catalytic role in this reaction. This Nitrosospira multiformis (strain ATCC 25196 / NCIMB 11849 / C 71) protein is tRNA N6-adenosine threonylcarbamoyltransferase.